Consider the following 73-residue polypeptide: UPF0150 protein ssl0259 (73 aa).

It belongs to the UPF0150 family.

The polypeptide is UPF0150 protein ssl0259 (Synechocystis sp. (strain ATCC 27184 / PCC 6803 / Kazusa)).